The chain runs to 715 residues: Transcription factor MST12 (715 aa).

Positions 214–224 (SSSFNAQQVSF) are enriched in low complexity. 3 disordered regions span residues 214-243 (SSSFNAQQVSFPPSQSTSPVMRAMDSMPPP), 439-469 (AAHRPSDLRRSVSASVGPVAEGDESLDNSPP), and 518-539 (PMPSEDMTSPMDDRSRPMAQGG). 2 consecutive C2H2-type zinc fingers follow at residues 564–588 (HSCPIPTCGRLFKRLEHLKRHVRTH) and 594–616 (YICPYCSKAFSRSDNLAQHKRTH). The segment at 632-691 (EEEYSGDDHLGSLEEASPTSEGGYVTSSLNSAMAHSNTSQHPGSNAVSPNPGPMSHAPTY) is disordered. Residues 648–679 (SPTSEGGYVTSSLNSAMAHSNTSQHPGSNAVS) are compositionally biased toward polar residues.

This sequence belongs to the STE12 transcription factor family.

The protein resides in the nucleus. Functionally, transcription factor that may function downstream of PMK1 to regulate genes involved in infectious hyphae growth. Is not essential for vegetative growth, conidiation or appressorium formation. May be involved in the regulation of the expression of the cell surface sensor MSB2. In Pyricularia oryzae (strain 70-15 / ATCC MYA-4617 / FGSC 8958) (Rice blast fungus), this protein is Transcription factor MST12.